Consider the following 78-residue polypeptide: ATP synthase subunit c (78 aa).

A run of 2 helical transmembrane segments spans residues 11-31 and 53-73; these read FIGA…VGHV and LFIG…VALL.

It belongs to the ATPase C chain family. F-type ATPases have 2 components, F(1) - the catalytic core - and F(0) - the membrane proton channel. F(1) has five subunits: alpha(3), beta(3), gamma(1), delta(1), epsilon(1). F(0) has four main subunits: a(1), b(1), b'(1) and c(10-14). The alpha and beta chains form an alternating ring which encloses part of the gamma chain. F(1) is attached to F(0) by a central stalk formed by the gamma and epsilon chains, while a peripheral stalk is formed by the delta, b and b' chains.

The protein resides in the cell inner membrane. F(1)F(0) ATP synthase produces ATP from ADP in the presence of a proton or sodium gradient. F-type ATPases consist of two structural domains, F(1) containing the extramembraneous catalytic core and F(0) containing the membrane proton channel, linked together by a central stalk and a peripheral stalk. During catalysis, ATP synthesis in the catalytic domain of F(1) is coupled via a rotary mechanism of the central stalk subunits to proton translocation. Functionally, key component of the F(0) channel; it plays a direct role in translocation across the membrane. A homomeric c-ring of between 10-14 subunits forms the central stalk rotor element with the F(1) delta and epsilon subunits. This is ATP synthase subunit c from Jannaschia sp. (strain CCS1).